The chain runs to 177 residues: B9 domain-containing protein 2 (177 aa).

In terms of domain architecture, C2 B9-type spans 2-118 (AEVHIIGQIL…EIGTWKVAPN (117 aa)).

It belongs to the B9D family. In terms of assembly, probable component of the tectonic-like complex (also named MKS complex), composed of B9d1, B9d2, Cc2d2a, Mks1 and tctn. Expressed in chordotonal neurons in the antennae (at protein level). Expressed in spermatids (at protein level).

The protein resides in the cytoplasm. It localises to the cytoskeleton. Its subcellular location is the cilium basal body. Its function is as follows. Probable component of the tectonic-like complex (also named MKS complex), a complex localized at the transition zone of primary cilia. Has a role in ciliary structure and function. The sequence is that of B9 domain-containing protein 2 from Drosophila melanogaster (Fruit fly).